Reading from the N-terminus, the 78-residue chain is MPTKAGTKSTANKKTTKGSSKSGSSRGHTGKTHASSSMHSGMLYKDMVNIARSRGIPIYQNGSRLTKSELEKKIKRSK.

Residues 1-27 (MPTKAGTKSTANKKTTKGSSKSGSSRG) are compositionally biased toward low complexity. The interval 1–41 (MPTKAGTKSTANKKTTKGSSKSGSSRGHTGKTHASSSMHSG) is disordered.

Belongs to the asfivirus P10 family.

The protein localises to the virion. Functionally, may play a role in genome packaging through direct interaction with viral DNA. Binds to ssDNA and dsDNA with the same apparent affinity in vitro. This is Structural DNA-binding protein p10 from African swine fever virus (strain Badajoz 1971 Vero-adapted) (Ba71V).